A 522-amino-acid chain; its full sequence is Glutamate--cysteine ligase (522 aa).

This sequence belongs to the glutamate--cysteine ligase type 1 family. Type 1 subfamily.

The enzyme catalyses L-cysteine + L-glutamate + ATP = gamma-L-glutamyl-L-cysteine + ADP + phosphate + H(+). Its pathway is sulfur metabolism; glutathione biosynthesis; glutathione from L-cysteine and L-glutamate: step 1/2. The polypeptide is Glutamate--cysteine ligase (Vibrio campbellii (strain ATCC BAA-1116)).